We begin with the raw amino-acid sequence, 270 residues long: Formamidopyrimidine-DNA glycosylase (270 aa).

Catalysis depends on proline 2, which acts as the Schiff-base intermediate with DNA. Glutamate 3 functions as the Proton donor in the catalytic mechanism. Lysine 56 (proton donor; for beta-elimination activity) is an active-site residue. DNA-binding residues include histidine 89, arginine 107, and arginine 151. The FPG-type zinc finger occupies 236 to 270; that stretch reads TVYGRAGEPCRVCATPIRLLRQGQRSTYYCPNCQK. Residue arginine 260 is the Proton donor; for delta-elimination activity of the active site.

The protein belongs to the FPG family. In terms of assembly, monomer. It depends on Zn(2+) as a cofactor.

The catalysed reaction is Hydrolysis of DNA containing ring-opened 7-methylguanine residues, releasing 2,6-diamino-4-hydroxy-5-(N-methyl)formamidopyrimidine.. It catalyses the reaction 2'-deoxyribonucleotide-(2'-deoxyribose 5'-phosphate)-2'-deoxyribonucleotide-DNA = a 3'-end 2'-deoxyribonucleotide-(2,3-dehydro-2,3-deoxyribose 5'-phosphate)-DNA + a 5'-end 5'-phospho-2'-deoxyribonucleoside-DNA + H(+). In terms of biological role, involved in base excision repair of DNA damaged by oxidation or by mutagenic agents. Acts as a DNA glycosylase that recognizes and removes damaged bases. Has a preference for oxidized purines, such as 7,8-dihydro-8-oxoguanine (8-oxoG). Has AP (apurinic/apyrimidinic) lyase activity and introduces nicks in the DNA strand. Cleaves the DNA backbone by beta-delta elimination to generate a single-strand break at the site of the removed base with both 3'- and 5'-phosphates. This chain is Formamidopyrimidine-DNA glycosylase, found in Variovorax paradoxus (strain S110).